Here is a 1570-residue protein sequence, read N- to C-terminus: Mediator of RNA polymerase II transcription subunit 1 (1570 aa).

Short sequence motifs (LXXLL motif) lie at residues 585 to 589 (LTSLL) and 626 to 630 (LMNLL). Disordered regions lie at residues 592–687 (TNNT…TEDD), 771–880 (SKLS…FKDF), and 922–1561 (SKTL…MDDD). Basic and acidic residues predominate over residues 675–687 (TGAEKMKNQTEDD). Composition is skewed to polar residues over residues 788–801 (RDSSSSGHSQSTLF), 832–861 (GSPNSDSPNTFFNSVDFNPDLLNSQSQSGF), and 931–942 (QETQSRSQSPLL). The span at 946-958 (LGKDRPQKQKVKE) shows a compositional bias: basic and acidic residues. Gly residues predominate over residues 961-970 (NGGGAGGGLS). Composition is skewed to low complexity over residues 1022-1035 (PTSTGGSKSPGTSG), 1066-1082 (SSHGQYSSSGSSSSSSS), 1089-1113 (SSLSSSASGKIKSNKSDGSSGMKIG), 1121-1140 (SGQSGQSSSQSKNSSQSMGK), and 1152-1161 (SSNVSNSSGS). A compositionally biased stretch (polar residues) spans 1173-1190 (MNPSLSKPNISPSHSRPS). A compositionally biased stretch (gly residues) spans 1217-1228 (GSGGQHLSGGGS). A compositionally biased stretch (low complexity) spans 1229–1271 (NSTTKSSSGLVSSGSLSQKPNSSSSSSSSSSSSSSSSSSSSSS). Over residues 1276-1287 (VSQNLHGNSKGK) the composition is skewed to polar residues. A compositionally biased stretch (gly residues) spans 1308–1328 (VGTGGPGSEDPMDGGGGGGST). A compositionally biased stretch (basic and acidic residues) spans 1347–1359 (PTKREKSEKDKSK). Composition is skewed to polar residues over residues 1418 to 1433 (SQMQKNYGSPLISGST) and 1441 to 1455 (PSHNKSPAYTPQALD). Over residues 1459–1469 (ESGSSSIAEKS) the composition is skewed to low complexity. Over residues 1494 to 1503 (KHKKHKKEKK) the composition is skewed to basic residues. Residues 1504–1516 (RLKDKDRDREKKK) show a composition bias toward basic and acidic residues. Over residues 1536–1546 (MAMSGGSMMSS) the composition is skewed to low complexity.

It belongs to the Mediator complex subunit 1 family. In terms of assembly, component of the Mediator complex.

It is found in the nucleus. In terms of biological role, component of the Mediator complex, a coactivator involved in the regulated transcription of nearly all RNA polymerase II-dependent genes. Mediator functions as a bridge to convey information from gene-specific regulatory proteins to the basal RNA polymerase II transcription machinery. Mediator is recruited to promoters by direct interactions with regulatory proteins and serves as a scaffold for the assembly of a functional preinitiation complex with RNA polymerase II and the general transcription factors. The chain is Mediator of RNA polymerase II transcription subunit 1 (med1) from Xenopus laevis (African clawed frog).